Here is a 1310-residue protein sequence, read N- to C-terminus: PAN2-PAN3 deadenylation complex catalytic subunit pan2 (1310 aa).

WD repeat units follow at residues 22-61, 67-105, 106-144, and 145-184; these read YHAGPASTIAFDNQDELLWIGTQKGFAGSFIGRELKRFTA, ETDGPLRQFLFVDKGVIFLGSRSVYMAARSGVPIWSIRH, ESMQDLRAMSFTSKGTSEILVAGWQNKMLVIDVNKGEVV, and KELPTQDQYSFLKMSRYICAATNKGTVNILDPITFTIKKQ. The interval 318-463 is linker; that stretch reads QFTEIGIPPR…NNDHWSLRPE (146 aa). The region spanning 463–850 is the USP domain; sequence EAPPEYRICE…MPVVVMFQVK (388 aa). 8 residues coordinate Zn(2+): H525, C530, C535, C538, C645, C648, C700, and C703. Positions 897 to 1070 constitute an Exonuclease domain; that stretch reads IAIDTEFIRL…EDAQTALKLY (174 aa). A divalent metal cation-binding residues include D900, E902, D1009, and D1062. Positions 1121-1169 are disordered; it reads TPPVPAPGTTEGSFEISNSSTATTGGSALSATGGMGSASASSSMPSTPV. Residues 1139 to 1168 show a composition bias toward low complexity; it reads SSTATTGGSALSATGGMGSASASSSMPSTP.

It belongs to the peptidase C19 family. PAN2 subfamily. In terms of assembly, forms a heterotrimer with an asymmetric homodimer of the regulatory subunit par-2/pan3 to form the poly(A)-nuclease (PAN) deadenylation complex. A divalent metal cation is required as a cofactor.

Its subcellular location is the cytoplasm. The enzyme catalyses Exonucleolytic cleavage of poly(A) to 5'-AMP.. Its activity is regulated as follows. Positively regulated by the regulatory subunit par-2/pan3. Functionally, catalytic subunit of the poly(A)-nuclease (PAN) deadenylation complex, one of two cytoplasmic mRNA deadenylases involved in mRNA turnover. PAN specifically shortens poly(A) tails of RNA and the activity is stimulated by poly(A)-binding protein pabp-1. PAN deadenylation is followed by rapid degradation of the shortened mRNA tails by the CCR4-NOT complex. Deadenylated mRNAs are then degraded by two alternative mechanisms, namely exosome-mediated 3'-5' exonucleolytic degradation, or deadenylation-dependent mRNA decaping and subsequent 5'-3' exonucleolytic degradation by rgb-30/xrn1. May also be involved in post-transcriptional maturation of mRNA poly(A) tails. In Neurospora crassa (strain ATCC 24698 / 74-OR23-1A / CBS 708.71 / DSM 1257 / FGSC 987), this protein is PAN2-PAN3 deadenylation complex catalytic subunit pan2 (par-1).